The chain runs to 301 residues: GTPase Era (301 aa).

One can recognise an Era-type G domain in the interval tyrosine 7–glutamate 175. Positions glycine 15 to serine 22 are G1. Residue glycine 15–serine 22 coordinates GTP. The interval glutamine 41–histidine 45 is G2. Positions aspartate 62–glycine 65 are G3. GTP is bound by residues aspartate 62–leucine 66 and asparagine 124–aspartate 127. Residues asparagine 124–aspartate 127 are G4. Residues isoleucine 154–alanine 156 form a G5 region. Residues leucine 206–serine 283 form the KH type-2 domain.

The protein belongs to the TRAFAC class TrmE-Era-EngA-EngB-Septin-like GTPase superfamily. Era GTPase family. Monomer.

The protein localises to the cytoplasm. It is found in the cell inner membrane. Its function is as follows. An essential GTPase that binds both GDP and GTP, with rapid nucleotide exchange. Plays a role in 16S rRNA processing and 30S ribosomal subunit biogenesis and possibly also in cell cycle regulation and energy metabolism. The chain is GTPase Era from Escherichia fergusonii (strain ATCC 35469 / DSM 13698 / CCUG 18766 / IAM 14443 / JCM 21226 / LMG 7866 / NBRC 102419 / NCTC 12128 / CDC 0568-73).